The primary structure comprises 75 residues: Dermaseptin-related peptide (75 aa).

An N-terminal signal peptide occupies residues 1–22 (MAFLNKSLLLVLFLGLVSLSIC). Positions 23–43 (EEERRENEDEEEQEDDEQSEM) are excised as a propeptide. Residues 24-44 (EERRENEDEEEQEDDEQSEMR) are disordered. The span at 30–40 (EDEEEQEDDEQ) shows a compositional bias: acidic residues. At Q72 the chain carries Glutamine amide. Positions 74 to 75 (EQ) are excised as a propeptide.

Expressed by the skin glands.

Its subcellular location is the secreted. Has antibacterial activity against Gram-positive bacterium M.luteus NCT C2665 but not against Gram-negative bacterium E.coli K12D31. This is Dermaseptin-related peptide from Agalychnis callidryas (Red-eyed tree frog).